The chain runs to 127 residues: Holo-[acyl-carrier-protein] synthase (127 aa).

Mg(2+) contacts are provided by D8 and E60.

It belongs to the P-Pant transferase superfamily. AcpS family. It depends on Mg(2+) as a cofactor.

The protein resides in the cytoplasm. The enzyme catalyses apo-[ACP] + CoA = holo-[ACP] + adenosine 3',5'-bisphosphate + H(+). In terms of biological role, transfers the 4'-phosphopantetheine moiety from coenzyme A to a Ser of acyl-carrier-protein. This chain is Holo-[acyl-carrier-protein] synthase, found in Marinomonas sp. (strain MWYL1).